We begin with the raw amino-acid sequence, 87 residues long: Small ribosomal subunit protein bS21 (87 aa).

Over residues 35-52 (HYEKPSEKKAREKAEAVR) the composition is skewed to basic and acidic residues. A disordered region spans residues 35-87 (HYEKPSEKKAREKAEAVRRARKLARKKLQREGLLPSKPKPAFGADRRPSAAAR). A compositionally biased stretch (basic residues) spans 53–62 (RARKLARKKL). Basic and acidic residues predominate over residues 78-87 (ADRRPSAAAR).

The protein is Small ribosomal subunit protein bS21 of Rhodopseudomonas palustris (strain ATCC BAA-98 / CGA009).